We begin with the raw amino-acid sequence, 514 residues long: 2-isopropylmalate synthase (514 aa).

The region spanning 5–267 (IYIFDTTLRD…HTDIVTEEIT (263 aa)) is the Pyruvate carboxyltransferase domain. D14, H202, H204, and N238 together coordinate Mn(2+). The interval 392 to 514 (KLKYYQVFTG…SKDLQKISAN (123 aa)) is regulatory domain.

It belongs to the alpha-IPM synthase/homocitrate synthase family. LeuA type 1 subfamily. In terms of assembly, homodimer. The cofactor is Mn(2+).

The protein resides in the cytoplasm. It catalyses the reaction 3-methyl-2-oxobutanoate + acetyl-CoA + H2O = (2S)-2-isopropylmalate + CoA + H(+). The protein operates within amino-acid biosynthesis; L-leucine biosynthesis; L-leucine from 3-methyl-2-oxobutanoate: step 1/4. Functionally, catalyzes the condensation of the acetyl group of acetyl-CoA with 3-methyl-2-oxobutanoate (2-ketoisovalerate) to form 3-carboxy-3-hydroxy-4-methylpentanoate (2-isopropylmalate). This chain is 2-isopropylmalate synthase, found in Clostridium kluyveri (strain NBRC 12016).